Consider the following 57-residue polypeptide: Stress response protein (57 aa).

Residues 6-10 (RKERR) carry the Nuclear localization signal motif.

As to expression, mesophyll protoplasts.

It is found in the nucleus. Its function is as follows. Stress response. May play a role in the reentering of protoplasts into the cell cycle. The sequence is that of Stress response protein from Nicotiana sylvestris (Wood tobacco).